A 343-amino-acid polypeptide reads, in one-letter code: Small ribosomal subunit biogenesis GTPase RsgA (343 aa).

The CP-type G domain occupies 116–275; it reads RGQLKPVAAN…LIDSPGIREF (160 aa). GTP-binding positions include 163-166 and 217-225; these read NKAD and GQSGVGKSS. Residues Cys299, Cys304, His306, and Cys312 each contribute to the Zn(2+) site.

This sequence belongs to the TRAFAC class YlqF/YawG GTPase family. RsgA subfamily. Monomer. Associates with 30S ribosomal subunit, binds 16S rRNA. Zn(2+) serves as cofactor.

The protein resides in the cytoplasm. Functionally, one of several proteins that assist in the late maturation steps of the functional core of the 30S ribosomal subunit. Helps release RbfA from mature subunits. May play a role in the assembly of ribosomal proteins into the subunit. Circularly permuted GTPase that catalyzes slow GTP hydrolysis, GTPase activity is stimulated by the 30S ribosomal subunit. The sequence is that of Small ribosomal subunit biogenesis GTPase RsgA from Pseudomonas syringae pv. syringae (strain B728a).